Consider the following 498-residue polypeptide: Ribose import ATP-binding protein RbsA (498 aa).

ABC transporter domains lie at 2–237 (LALQ…VGRD) and 247–491 (VTPG…TGQQ). Residue 34-41 (GENGAGKS) participates in ATP binding.

This sequence belongs to the ABC transporter superfamily. Ribose importer (TC 3.A.1.2.1) family. As to quaternary structure, the complex is composed of an ATP-binding protein (RbsA), two transmembrane proteins (RbsC) and a solute-binding protein (RbsB).

Its subcellular location is the cell membrane. The catalysed reaction is D-ribose(out) + ATP + H2O = D-ribose(in) + ADP + phosphate + H(+). Its function is as follows. Part of the ABC transporter complex RbsABC involved in ribose import. Responsible for energy coupling to the transport system. The polypeptide is Ribose import ATP-binding protein RbsA (Deinococcus geothermalis (strain DSM 11300 / CIP 105573 / AG-3a)).